We begin with the raw amino-acid sequence, 234 residues long: Small ribosomal subunit protein uS3 (234 aa).

The KH type-2 domain maps to Ile-39–Lys-107.

It belongs to the universal ribosomal protein uS3 family. As to quaternary structure, part of the 30S ribosomal subunit. Forms a tight complex with proteins S10 and S14.

Its function is as follows. Binds the lower part of the 30S subunit head. Binds mRNA in the 70S ribosome, positioning it for translation. The polypeptide is Small ribosomal subunit protein uS3 (Helicobacter pylori (strain J99 / ATCC 700824) (Campylobacter pylori J99)).